Consider the following 37-residue polypeptide: M-oxotoxin-Ot2b (37 aa).

In terms of tissue distribution, expressed by the venom gland.

Its subcellular location is the secreted. Functionally, disrupts biological membranes, particularly those rich in phosphocholine. Has antimicrobial activity against Gram-negative bacterium E.coli, Gram-positive bacteria B.subtilis and S.aureus, and hemolytic activity against sheep, pig and guinea pig red blood cells. Has insecticidal activity against S.frugiperda ovarian cells by opening non-selective ion channels. Enhances the insecticidal activity of spider venom neurotoxic peptides. This Oxyopes takobius (Lynx spider) protein is M-oxotoxin-Ot2b.